Consider the following 448-residue polypeptide: Phosphoglucosamine mutase (448 aa).

The active-site Phosphoserine intermediate is the Ser100. Mg(2+) contacts are provided by Ser100, Asp240, Asp242, and Asp244. At Ser100 the chain carries Phosphoserine.

It belongs to the phosphohexose mutase family. Requires Mg(2+) as cofactor. Post-translationally, activated by phosphorylation.

It carries out the reaction alpha-D-glucosamine 1-phosphate = D-glucosamine 6-phosphate. In terms of biological role, catalyzes the conversion of glucosamine-6-phosphate to glucosamine-1-phosphate. This is Phosphoglucosamine mutase from Bacillus mycoides (strain KBAB4) (Bacillus weihenstephanensis).